A 433-amino-acid polypeptide reads, in one-letter code: Aspartate--tRNA(Asp/Asn) ligase (433 aa).

Glu167 contributes to the L-aspartate binding site. An aspartate region spans residues 189–192 (QLFK). Arg211 lines the L-aspartate pocket. ATP-binding positions include 211-213 (RAE), 219-221 (RHL), and Glu356. Mg(2+)-binding residues include Glu356 and Ser359. L-aspartate-binding residues include Ser359 and Arg363. 404 to 407 (GGER) contacts ATP.

This sequence belongs to the class-II aminoacyl-tRNA synthetase family. Type 2 subfamily. In terms of assembly, homodimer. Requires Mg(2+) as cofactor.

Its subcellular location is the cytoplasm. The catalysed reaction is tRNA(Asx) + L-aspartate + ATP = L-aspartyl-tRNA(Asx) + AMP + diphosphate. Its function is as follows. Aspartyl-tRNA synthetase with relaxed tRNA specificity since it is able to aspartylate not only its cognate tRNA(Asp) but also tRNA(Asn). Reaction proceeds in two steps: L-aspartate is first activated by ATP to form Asp-AMP and then transferred to the acceptor end of tRNA(Asp/Asn). The sequence is that of Aspartate--tRNA(Asp/Asn) ligase from Natronomonas pharaonis (strain ATCC 35678 / DSM 2160 / CIP 103997 / JCM 8858 / NBRC 14720 / NCIMB 2260 / Gabara) (Halobacterium pharaonis).